Reading from the N-terminus, the 942-residue chain is NBPF family member NBPF8 (942 aa).

Positions 89–130 form a coiled coil; it reads AEELRQYKVLVHSQERELTQLKEKLQEGRDASRSLNEHLQAL. Positions 161–203 are disordered; that stretch reads KLSPENDEDEDEDVQVEEDEKVQKSSAPREVQKAEESKVPEDS. Acidic residues predominate over residues 165-180; sequence ENDEDEDEDVQVEEDE. The Olduvai 1 domain maps to 165–259; the sequence is ENDEDEDEDV…ECQDALNILS (95 aa). A compositionally biased stretch (basic and acidic residues) spans 190–201; it reads EVQKAEESKVPE. Residues 339–401 adopt a coiled-coil conformation; the sequence is KSMLRNERQF…LSLNEHLQAL (63 aa). Olduvai domains are found at residues 436–528, 529–617, 620–675, 676–767, 770–843, and 844–904; these read ENDN…HIIP, ENES…ATGP, SREL…VDMD, EIEK…PPCP, SREL…RSKK, and KRRR…RSVF. 2 disordered regions span residues 451–474 and 528–566; these read EKVQ…PEDS and PENE…EGYS. 2 stretches are compositionally biased toward acidic residues: residues 530–539 and 550–562; these read NESDDEEEEE and ESEE…ESWD. Residues 831 to 849 are compositionally biased toward basic residues; the sequence is GKGKIRRGRRSKKKRRRGR. Residues 831 to 863 are disordered; the sequence is GKGKIRRGRRSKKKRRRGRKEGEEDQNPPCPRL.

Belongs to the NBPF family. Expressed in the mammary gland.

It is found in the cytoplasm. This Homo sapiens (Human) protein is NBPF family member NBPF8.